A 185-amino-acid chain; its full sequence is Probable prefoldin subunit 3 (185 aa).

It belongs to the prefoldin subunit alpha family. As to quaternary structure, heterohexamer of two PFD-alpha type and four PFD-beta type subunits.

In terms of biological role, binds specifically to cytosolic chaperonin (c-CPN) and transfers target proteins to it. Binds to nascent polypeptide chain and promotes folding in an environment in which there are many competing pathways for nonnative proteins. The polypeptide is Probable prefoldin subunit 3 (pfd-3) (Caenorhabditis elegans).